A 288-amino-acid polypeptide reads, in one-letter code: NAD kinase (288 aa).

The Proton acceptor role is filled by D68. Residues 68–69 (DG), 142–143 (ND), R153, D172, and Q242 contribute to the NAD(+) site.

This sequence belongs to the NAD kinase family. It depends on a divalent metal cation as a cofactor.

The protein resides in the cytoplasm. The catalysed reaction is NAD(+) + ATP = ADP + NADP(+) + H(+). Its function is as follows. Involved in the regulation of the intracellular balance of NAD and NADP, and is a key enzyme in the biosynthesis of NADP. Catalyzes specifically the phosphorylation on 2'-hydroxyl of the adenosine moiety of NAD to yield NADP. The chain is NAD kinase from Desulforamulus reducens (strain ATCC BAA-1160 / DSM 100696 / MI-1) (Desulfotomaculum reducens).